The primary structure comprises 369 residues: 4-hydroxy-3-methylbut-2-en-1-yl diphosphate synthase (flavodoxin) (369 aa).

4 residues coordinate [4Fe-4S] cluster: C270, C273, C305, and E312.

It belongs to the IspG family. [4Fe-4S] cluster serves as cofactor.

The catalysed reaction is (2E)-4-hydroxy-3-methylbut-2-enyl diphosphate + oxidized [flavodoxin] + H2O + 2 H(+) = 2-C-methyl-D-erythritol 2,4-cyclic diphosphate + reduced [flavodoxin]. It participates in isoprenoid biosynthesis; isopentenyl diphosphate biosynthesis via DXP pathway; isopentenyl diphosphate from 1-deoxy-D-xylulose 5-phosphate: step 5/6. Functionally, converts 2C-methyl-D-erythritol 2,4-cyclodiphosphate (ME-2,4cPP) into 1-hydroxy-2-methyl-2-(E)-butenyl 4-diphosphate. In Pseudomonas fluorescens (strain ATCC BAA-477 / NRRL B-23932 / Pf-5), this protein is 4-hydroxy-3-methylbut-2-en-1-yl diphosphate synthase (flavodoxin).